The primary structure comprises 278 residues: Pantothenate synthetase (278 aa).

An ATP-binding site is contributed by 27–34 (MGNLHEGH). The active-site Proton donor is histidine 34. Glutamine 58 is a (R)-pantoate binding site. Glutamine 58 lines the beta-alanine pocket. 147–150 (GEKD) serves as a coordination point for ATP. Glutamine 153 is a (R)-pantoate binding site. An ATP-binding site is contributed by 184-187 (YSSR).

Belongs to the pantothenate synthetase family. As to quaternary structure, homodimer.

The protein localises to the cytoplasm. It carries out the reaction (R)-pantoate + beta-alanine + ATP = (R)-pantothenate + AMP + diphosphate + H(+). It functions in the pathway cofactor biosynthesis; (R)-pantothenate biosynthesis; (R)-pantothenate from (R)-pantoate and beta-alanine: step 1/1. Functionally, catalyzes the condensation of pantoate with beta-alanine in an ATP-dependent reaction via a pantoyl-adenylate intermediate. The chain is Pantothenate synthetase from Acidithiobacillus ferrooxidans (strain ATCC 23270 / DSM 14882 / CIP 104768 / NCIMB 8455) (Ferrobacillus ferrooxidans (strain ATCC 23270)).